The primary structure comprises 257 residues: Enolase-phosphatase E1 (257 aa).

Residues aspartate 16 and glutamate 18 each contribute to the Mg(2+) site. Substrate is bound by residues 150 to 151 (SS) and lysine 184. Aspartate 209 is a binding site for Mg(2+).

The protein belongs to the HAD-like hydrolase superfamily. MasA/MtnC family. As to quaternary structure, monomer. It depends on Mg(2+) as a cofactor.

It is found in the cytoplasm. Its subcellular location is the nucleus. The enzyme catalyses 5-methylsulfanyl-2,3-dioxopentyl phosphate + H2O = 1,2-dihydroxy-5-(methylsulfanyl)pent-1-en-3-one + phosphate. It functions in the pathway amino-acid biosynthesis; L-methionine biosynthesis via salvage pathway; L-methionine from S-methyl-5-thio-alpha-D-ribose 1-phosphate: step 3/6. It participates in amino-acid biosynthesis; L-methionine biosynthesis via salvage pathway; L-methionine from S-methyl-5-thio-alpha-D-ribose 1-phosphate: step 4/6. Bifunctional enzyme that catalyzes the enolization of 2,3-diketo-5-methylthiopentyl-1-phosphate (DK-MTP-1-P) into the intermediate 2-hydroxy-3-keto-5-methylthiopentenyl-1-phosphate (HK-MTPenyl-1-P), which is then dephosphorylated to form the acireductone 1,2-dihydroxy-3-keto-5-methylthiopentene (DHK-MTPene). This Mus musculus (Mouse) protein is Enolase-phosphatase E1 (Enoph1).